We begin with the raw amino-acid sequence, 1115 residues long: MDKLRMVLHENSGSADFRRCSAHLSSFTFAVVAVLSACLVTSSLGGKDKELRLTGGENKCSGRVEVKVQEEWGTVCNNGWDMDVVSVVCRQLGCPTAIKATGWANFSAGSGRIWMDHVSCRGNESALWDCKHDGWGKHNCTHQQDAGVTCSDGSDLEMGLVNGGNRCLGRIEVKFQGRWGTVCDDNFNINHASVVCKQLECGSAVSFSGSANFGEGSGPIWFDDLVCNGNESALWNCKHEGWGKHNCDHAEDAGVICLNGADLKLRVVDGVTECSGRLEVKFQGEWGTICDDGWDSDDAAVACKQLGCPTAVTAIGRVNASEGTGHIWLDSVSCHGHESALWQCRHHEWGKHYCNHDEDAGVTCSDGSDLELRLKGGGSHCAGTVEVEIQKLVGKVCDRSWGLKEADVVCRQLGCGSALKTSYQVYSKTKATNTWLFVSSCNGNETSLWDCKNWQWGGLSCDHYDEAKITCSAHRKPRLVGGDIPCSGRVEVQHGDTWGTVCDSDFSLEAASVLCRELQCGTVVSLLGGAHFGEGSGQIWAEEFQCEGHESHLSLCPVAPRPDGTCSHSRDVGVVCSRYTQIRLVNGKTPCEGRVELNILGSWGSLCNSHWDMEDAHVLCQQLKCGVALSIPGGAPFGKGSEQVWRHMFHCTGTEKHMGDCSVTALGASLCSSGQVASVICSGNQSQTLSPCNSSSSDPSSSIISEENGVACIGSGQLRLVDGGGRCAGRVEVYHEGSWGTICDDSWDLNDAHVVCKQLSCGWAINATGSAHFGEGTGPIWLDEINCNGKESHIWQCHSHGWGRHNCRHKEDAGVICSEFMSLRLISENSRETCAGRLEVFYNGAWGSVGRNSMSPATVGVVCRQLGCADRGDISPASSDKTVSRHMWVDNVQCPKGPDTLWQCPSSPWKKRLASPSEETWITCANKIRLQEGNTNCSGRVEIWYGGSWGTVCDDSWDLEDAQVVCRQLGCGSALEAGKEAAFGQGTGPIWLNEVKCKGNETSLWDCPARSWGHSDCGHKEDAAVTCSEIAKSRESLHATGRSSFVALAIFGVILLACLIAFLIWTQKRRQRQRLSVFSGGENSVHQIQYREMNSCLKADETDMLNPSGDHSEVQ.

The first 46 residues, 1 to 46 (MDKLRMVLHENSGSADFRRCSAHLSSFTFAVVAVLSACLVTSSLGG), serve as a signal peptide directing secretion. The Extracellular segment spans residues 47 to 1044 (KDKELRLTGG…ESLHATGRSS (998 aa)). 9 SRCR domains span residues 51–151 (LRLT…VTCS), 158–258 (MGLV…VICL), 265–365 (LRVV…VTCS), 372–472 (LRLK…ITCS), 477–577 (PRLV…VVCS), 582–682 (IRLV…VICS), 718–818 (LRLV…VICS), 823–925 (LRLI…ITCA), and 928–1028 (IRLQ…VTCS). Disulfide bonds link cysteine 76–cysteine 140, cysteine 89–cysteine 150, cysteine 120–cysteine 130, cysteine 183–cysteine 247, cysteine 196–cysteine 257, cysteine 227–cysteine 237, cysteine 290–cysteine 354, cysteine 303–cysteine 364, cysteine 334–cysteine 344, cysteine 397–cysteine 461, cysteine 410–cysteine 471, cysteine 441–cysteine 451, cysteine 502–cysteine 566, cysteine 515–cysteine 576, cysteine 546–cysteine 556, cysteine 607–cysteine 671, cysteine 620–cysteine 681, cysteine 651–cysteine 661, cysteine 743–cysteine 807, cysteine 756–cysteine 817, cysteine 787–cysteine 797, cysteine 863–cysteine 924, and cysteine 894–cysteine 904. An N-linked (GlcNAc...) asparagine glycan is attached at asparagine 105. Asparagine 139 carries an N-linked (GlcNAc...) asparagine glycan. Asparagine 936 carries an N-linked (GlcNAc...) asparagine glycan. Cystine bridges form between cysteine 953-cysteine 1017, cysteine 966-cysteine 1027, and cysteine 997-cysteine 1007. The chain crosses the membrane as a helical span at residues 1045 to 1065 (FVALAIFGVILLACLIAFLIW). The Cytoplasmic portion of the chain corresponds to 1066–1115 (TQKRRQRQRLSVFSGGENSVHQIQYREMNSCLKADETDMLNPSGDHSEVQ). Positions 1090–1093 (YREM) match the Internalization signal motif.

As to quaternary structure, interacts with CSNK2B. A soluble form (sCD163) is produced by proteolytic shedding which can be induced by lipopolysaccharide, phorbol ester and Fc region of immunoglobulin gamma. This cleavage is dependent on protein kinase C and tyrosine kinases and can be blocked by protease inhibitors. The shedding is inhibited by the tissue inhibitor of metalloproteinase TIMP3, and thus probably induced by membrane-bound metalloproteinases ADAMs. Post-translationally, phosphorylated. Expressed in monocytes and macrophages. Detected only in one population of monocytes (CD163+) which is in advanced maturation stage.

It localises to the secreted. Its subcellular location is the cell membrane. Involved in clearance and endocytosis of hemoglobin/haptoglobin complexes by macrophages and may thereby protect tissues from free hemoglobin-mediated oxidative damage. May play a role in the uptake and recycling of iron, via endocytosis of hemoglobin/haptoglobin and subsequent breakdown of heme. Binds hemoglobin/haptoglobin complexes in a calcium-dependent and pH-dependent manner. Induces a cascade of intracellular signals that involves tyrosine kinase-dependent calcium mobilization, inositol triphosphate production and secretion of IL6 and CSF1. May play a role in the process of infection of porcine monocytes/macrophages by African swine fever virus (ASFV). In case of porcine reproductive and respiratory syndrome virus (PRRSV), serves mediates virion attachment and plays a role in viral entry. In terms of biological role, after shedding, the soluble form (sCD163) may play an anti-inflammatory role. The chain is Scavenger receptor cysteine-rich type 1 protein M130 (CD163) from Sus scrofa (Pig).